The sequence spans 84 residues: Small ribosomal subunit protein uS17 (84 aa).

The protein belongs to the universal ribosomal protein uS17 family. In terms of assembly, part of the 30S ribosomal subunit.

One of the primary rRNA binding proteins, it binds specifically to the 5'-end of 16S ribosomal RNA. This Borrelia duttonii (strain Ly) protein is Small ribosomal subunit protein uS17.